The following is a 477-amino-acid chain: UDP-N-acetylmuramate--L-alanine ligase (477 aa).

122–128 (GTHGKTT) serves as a coordination point for ATP.

It belongs to the MurCDEF family.

The protein localises to the cytoplasm. It catalyses the reaction UDP-N-acetyl-alpha-D-muramate + L-alanine + ATP = UDP-N-acetyl-alpha-D-muramoyl-L-alanine + ADP + phosphate + H(+). The protein operates within cell wall biogenesis; peptidoglycan biosynthesis. Its function is as follows. Cell wall formation. This Xylella fastidiosa (strain 9a5c) protein is UDP-N-acetylmuramate--L-alanine ligase.